The following is a 769-amino-acid chain: MSTFRKSYKNQSKRFNNSHSNSSSTSVELTNLVEMFPDWEADELQGLLSENDNSLEIVIDLIVNNKVSKWEPIKKEKHKKKEKETEDHNSSTNGSTNSASTSSTAPSSDRKPYNKSKPQSSSTRPPKKQHANANYKKGGEKSAEKPKPTSTTSSTTTTPVQKETTPATNSWAAALSNDKPKKSVATTEESEPVEHAEEDGAKAQQEEQETVAELDNTTTTNGEQQEQQPEEETTQESQAPVEQAKPVLKEAAIPEPKQGSWASAITPKTVKPKAKPAPKPVSQPQPPKEEEEKEEKEPVVEEQVSEPVESIAEETVAEVSQSIPSEEPIESPVATATTTTAATTTEPSIVEQPQQQQQPQVVLPTSQQQVNSVGISFGSLSIQEESKDAEVPREEVIAEQTSQPEQTQQQQQQPIQDQQRYGLYNQQQTQQRYQQQQQSAYQQQPQQQQQQNQYSKQQQQQQQAPIQQQTAQQQYDYYNQFQQQYPQQTAQPGAQFGGYPGFDYSGYNQQAFAAASPAANHIATLGGSAGVGGGYGQYAQQAGSTDSSHSPITNQSTLQQQQAAAAALNAQQQQQQMPTPFGYPAYYNYYYNNPYFNAGGLGSTGFGAPQQGNQQGQQPTSSQGASQQGQAQPQVPSAGSQQGGASMGSNGFGGQQQYYNPNQFNNRYPGYSYPPQQQQQQQQPVQQNAGQSQQGSSQSASNSEGASDGQQSSSQGQQGQQGQGPQGVQQGQGQQPPVPQQHMMPQYGGYQQYPQYGYQDSNQYRGGWY.

Residues 1–12 (MSTFRKSYKNQS) show a composition bias toward basic residues. 5 disordered regions span residues 1 to 27 (MSTF…STSV), 66 to 368 (KVSK…TSQQ), 381 to 472 (SIQE…QTAQ), 540 to 559 (QQAG…STLQ), and 602 to 769 (GSTG…GGWY). 2 stretches are compositionally biased toward low complexity: residues 17–26 (NSHSNSSSTS) and 90–107 (SSTN…TAPS). In terms of domain architecture, CUE spans 24–67 (STSVELTNLVEMFPDWEADELQGLLSENDNSLEIVIDLIVNNKV). Basic and acidic residues predominate over residues 137-147 (KGGEKSAEKPK). The segment covering 148–168 (PTSTTSSTTTTPVQKETTPAT) has biased composition (low complexity). A compositionally biased stretch (basic and acidic residues) spans 192-205 (PVEHAEEDGAKAQQ). A compositionally biased stretch (low complexity) spans 217–227 (TTTTNGEQQEQ). Over residues 277–286 (APKPVSQPQP) the composition is skewed to pro residues. Basic and acidic residues predominate over residues 287–299 (PKEEEEKEEKEPV). 2 stretches are compositionally biased toward low complexity: residues 322–345 (SIPS…ATTT) and 352–368 (QPQQ…TSQQ). A compositionally biased stretch (basic and acidic residues) spans 384–396 (EESKDAEVPREEV). A compositionally biased stretch (low complexity) spans 399–472 (EQTSQPEQTQ…QAPIQQQTAQ (74 aa)). Over residues 545–557 (TDSSHSPITNQST) the composition is skewed to polar residues. Low complexity predominate over residues 607–640 (GAPQQGNQQGQQPTSSQGASQQGQAQPQVPSAGS). Residues 641-654 (QQGGASMGSNGFGG) show a composition bias toward gly residues. Composition is skewed to low complexity over residues 655–666 (QQQYYNPNQFNN), 675–718 (PQQQ…QGQQ), 726–735 (QGVQQGQGQQ), and 745–759 (PQYG…YGYQ). Over residues 760–769 (DSNQYRGGWY) the composition is skewed to polar residues.

The protein belongs to the DEF1 family. Homodimer; may form higher order oligomers. Interacts with the large RNA polymerase II subunit RPO21; the interaction is direct and serves to bridge RPO21 to the Elongin complex in a manner dependent on transcription stress. Interacts with RAD26. Ubiquitinated. In terms of processing, proteolytically cleaved by the proteasome in response to transcription stress; the resulting N-terminal form constitutes the activated nuclear form and the C-terminal portion is degraded.

The protein localises to the cytoplasm. The protein resides in the nucleus. Its subcellular location is the chromosome. It localises to the telomere. Functionally, recruits the ubiquitination machinery to RNA polymerase II for polyubiquitination, removal and degradation, when the transcription-coupled repair (TCR) factor RAD26 fails to efficiently displace stalled RNA polymerase II. Also involved in telomere length regulation. Binds DNA. This chain is RNA polymerase II degradation factor 1 (DEF1), found in Candida tropicalis (strain ATCC MYA-3404 / T1) (Yeast).